An 88-amino-acid polypeptide reads, in one-letter code: Enticin (88 aa).

A signal peptide spans 1 to 19 (MKTALPLLLLTCLVAAVQS). Disulfide bonds link C25–C33, C40–C52, and C59–C67. The propeptide occupies 69–88 (REQSQLNHDHLNNHTTTQQP).

As to quaternary structure, binds to attractin and temptin.

Its subcellular location is the secreted. Functionally, a component of the complex of water-borne protein pheromones that stimulates attraction and mating behavior. This Aplysia californica (California sea hare) protein is Enticin.